Reading from the N-terminus, the 504-residue chain is Glucose-6-phosphate isomerase (504 aa).

The Proton donor role is filled by Glu333. Residues His364 and Lys473 contribute to the active site.

This sequence belongs to the GPI family.

The protein resides in the cytoplasm. The enzyme catalyses alpha-D-glucose 6-phosphate = beta-D-fructose 6-phosphate. It participates in carbohydrate biosynthesis; gluconeogenesis. Its pathway is carbohydrate degradation; glycolysis; D-glyceraldehyde 3-phosphate and glycerone phosphate from D-glucose: step 2/4. Catalyzes the reversible isomerization of glucose-6-phosphate to fructose-6-phosphate. The chain is Glucose-6-phosphate isomerase from Xanthomonas axonopodis pv. citri (strain 306).